The following is a 230-amino-acid chain: Flagellar L-ring protein (230 aa).

Positions 1 to 26 are cleaved as a signal peptide; sequence MKQVRLLPSATVRAACAVAVAAFAAG. A lipid anchor (N-palmitoyl cysteine) is attached at cysteine 27. Cysteine 27 carries S-diacylglycerol cysteine lipidation.

This sequence belongs to the FlgH family. The basal body constitutes a major portion of the flagellar organelle and consists of four rings (L,P,S, and M) mounted on a central rod.

It localises to the cell outer membrane. It is found in the bacterial flagellum basal body. Assembles around the rod to form the L-ring and probably protects the motor/basal body from shearing forces during rotation. The chain is Flagellar L-ring protein from Burkholderia lata (strain ATCC 17760 / DSM 23089 / LMG 22485 / NCIMB 9086 / R18194 / 383).